A 785-amino-acid chain; its full sequence is Mitochondrial intermediate peptidase (785 aa).

A mitochondrion-targeting transit peptide spans 1–26; sequence MLKVTTSRPWVCSRCVRRQVQSRRRL. Positions 26-51 are disordered; it reads LATASTQYRESRPVPVDNSAPGAKRD. H566 contributes to the Zn(2+) binding site. E567 is an active-site residue. Zn(2+) is bound by residues H570 and H573.

The protein belongs to the peptidase M3 family. The cofactor is Zn(2+).

It localises to the mitochondrion matrix. It catalyses the reaction Release of an N-terminal octapeptide as second stage of processing of some proteins imported into the mitochondrion.. Its function is as follows. Cleaves proteins, imported into the mitochondrion, to their mature size. While most mitochondrial precursor proteins are processed to the mature form in one step by mitochondrial processing peptidase (MPP), the sequential cleavage by MIP of an octapeptide after initial processing by MPP is a required step for a subgroup of nuclear-encoded precursor proteins destined for the matrix or the inner membrane. This is Mitochondrial intermediate peptidase (oct1) from Botryotinia fuckeliana (strain B05.10) (Noble rot fungus).